The sequence spans 59 residues: U17-myrmicitoxin-Tb1f (59 aa).

An N-terminal signal peptide occupies residues 1–27 (MEKNRTTTFSVYLTIILFLISTFITMV). Residues 28 to 31 (ITES) constitute a propeptide that is removed on maturation. At His-58 the chain carries Histidine amide.

Expressed by the venom gland.

The protein resides in the secreted. The protein is U17-myrmicitoxin-Tb1f of Tetramorium bicarinatum (Tramp ant).